A 577-amino-acid chain; its full sequence is Scoloptoxin SSD14 (577 aa).

The signal sequence occupies residues 1-25; that stretch reads MGTSYRKLGYVLFLMLGMIVEEGIA.

In terms of assembly, heterodimer composed of subunits alpha and beta; probably disulfide-linked. In terms of tissue distribution, expressed by the venom gland.

The protein resides in the secreted. Dose-dependently induces human platelet aggregation on both plasma rich platelet and washed platelet (max. response at 3.2 ug/mL) and causes hemolysis against mouse and rabbit erythrocytes (35 and 65% respectively at 5 ug/mL). Does not show hemolytic activity against human erythrocytes (even at 100 ug/mL). The protein is Scoloptoxin SSD14 of Scolopendra dehaani (Thai centipede).